We begin with the raw amino-acid sequence, 195 residues long: NADH-quinone oxidoreductase subunit I (195 aa).

4Fe-4S ferredoxin-type domains lie at 44 to 74 and 90 to 119; these read LNRY…VEGA and QVYQ…MTNE. Residues C54, C57, C60, C64, C99, C102, C105, and C109 each contribute to the [4Fe-4S] cluster site. The segment at 145–195 is disordered; that stretch reads MTAPPHALRPGTTQDDYYRGDITAVPEQAAPEQAAPEQPAPEREPNPETEK. A compositionally biased stretch (low complexity) spans 168 to 181; that stretch reads AVPEQAAPEQAAPE. The segment covering 184–195 has biased composition (basic and acidic residues); sequence APEREPNPETEK.

Belongs to the complex I 23 kDa subunit family. As to quaternary structure, NDH-1 is composed of 14 different subunits. Subunits NuoA, H, J, K, L, M, N constitute the membrane sector of the complex. It depends on [4Fe-4S] cluster as a cofactor.

It localises to the cell membrane. It catalyses the reaction a quinone + NADH + 5 H(+)(in) = a quinol + NAD(+) + 4 H(+)(out). Its function is as follows. NDH-1 shuttles electrons from NADH, via FMN and iron-sulfur (Fe-S) centers, to quinones in the respiratory chain. The immediate electron acceptor for the enzyme in this species is believed to be ubiquinone. Couples the redox reaction to proton translocation (for every two electrons transferred, four hydrogen ions are translocated across the cytoplasmic membrane), and thus conserves the redox energy in a proton gradient. This Rhodococcus erythropolis (strain PR4 / NBRC 100887) protein is NADH-quinone oxidoreductase subunit I.